The primary structure comprises 443 residues: Zinc finger protein ZIC 1 (443 aa).

A C2H2-type 1; atypical zinc finger spans residues 221 to 256 (LICKWIEPEQLANPKKSCNKTFSTMHELVTHVTVEH). The C2H2-type 2; atypical zinc finger occupies 265–292 (HICVWEECPREGKPFKAKYKLINHIRVH). 3 consecutive C2H2-type zinc fingers follow at residues 298 to 322 (FPCP…KRTH), 328 to 352 (FKCE…MHVH), and 358 to 380 (YLCK…MKVH). Residues 371–433 (SSLRKHMKVH…AVHHTSNHST (63 aa)) are disordered. Low complexity predominate over residues 383–396 (SSQGSQPSPAASSG). Positions 397–413 (YESSTPPTIVSPSAENQ) are enriched in polar residues. Residues 408–443 (PSAENQSTSSLSPSSSAVHHTSNHSTLSSNFNEWYV) are negatively regulates transcriptional activity. Positions 414 to 433 (STSSLSPSSSAVHHTSNHST) are enriched in low complexity.

Belongs to the GLI C2H2-type zinc-finger protein family. During early gastrula stages, widely expressed in the dorsal ectoderm. At mid-gastrula, expressed throughout the presumptive neural plate and at late gastrula, expression gradually diminishes in the dorsal midline and increases in the anterior folds. By early neurula stage, expression becomes restricted to the lateral edges of the neural plate, corresponding to the presumptive dorsal neural plate and neural crest, and in flanking ectoderm. In early tailbud stages (stages 22-23), expressed in the dorsal forebrain, midbrain and hindbrain. Subsequently expressed in the telencephalon and at the diencephalon/mesencephalon boundary. In the spinal cord, expression is restricted to the dorsal most region including the roof plate. Also expressed in the somites but not in eye vesicles. At larval stages, expressed mainly in the dorsal neural tube throughout its anteroposterior axis.

It localises to the nucleus. It is found in the cytoplasm. Transcriptional activator that induces expression of multiple genes including pax3, en2, snai2/slug, feb and a subset of wnt genes. Has multiple key roles in the regulation of neural induction and neurogenesis: acts as a neural competence factor, sensitizing the presumptive neuroectoderm to respond to subsequent neuralizing signals. Promotes both preplacodal cell fates and neural crest cell fates, two of the cell populations that arise from the neural plate border. Cooperates with pax3 in concert with wnt signaling to determine neural crest fate. Synergizes with the bmp-inhibitor noggin/nog and acts through the wnt pathway to induce expression of en2. May bind to the minimal GLI-consensus sequence 5'-TGGGTGGTC-3'. The protein is Zinc finger protein ZIC 1 (zic1) of Xenopus laevis (African clawed frog).